The following is a 103-amino-acid chain: Cell division suppressor protein YneA (103 aa).

A LysM domain is found at 36 to 87 (VKIEVQSGDTLWGLADQVNDSKSIDKNAFIDWVTQHNDLASTEIQPGDILVI).

The protein belongs to the YneA family.

The protein resides in the cytoplasm. Its function is as follows. Inhibits cell division during the SOS response. Affects a later stage of the cell division protein assembly, after the assembly of the Z ring, by probably suppressing recruitment of FtsL and/or DivIC to the division machinery. The polypeptide is Cell division suppressor protein YneA (Bacillus pumilus (strain SAFR-032)).